The following is a 207-amino-acid chain: Ribosome maturation factor RimM (207 aa).

In terms of domain architecture, PRC barrel spans 114–207; sequence DDEYYWVDLI…RIDSDWPLDY (94 aa).

Belongs to the RimM family. As to quaternary structure, binds ribosomal protein uS19.

It is found in the cytoplasm. Functionally, an accessory protein needed during the final step in the assembly of 30S ribosomal subunit, possibly for assembly of the head region. Essential for efficient processing of 16S rRNA. May be needed both before and after RbfA during the maturation of 16S rRNA. It has affinity for free ribosomal 30S subunits but not for 70S ribosomes. This is Ribosome maturation factor RimM from Bordetella pertussis (strain Tohama I / ATCC BAA-589 / NCTC 13251).